A 101-amino-acid polypeptide reads, in one-letter code: UPF0473 protein SUB1774 (101 aa).

This sequence belongs to the UPF0473 family.

The polypeptide is UPF0473 protein SUB1774 (Streptococcus uberis (strain ATCC BAA-854 / 0140J)).